Reading from the N-terminus, the 476-residue chain is UDP-glycosyltransferase 71C3 (476 aa).

Residues serine 290, 349–351 (APQ), 366–374 (HCGWNSVLE), and 388–391 (YAEQ) contribute to the UDP-alpha-D-glucose site.

It belongs to the UDP-glycosyltransferase family.

Its function is as follows. Possesses low quercetin 3-O-glucosyltransferase activity in vitro. The protein is UDP-glycosyltransferase 71C3 (UGT71C3) of Arabidopsis thaliana (Mouse-ear cress).